A 98-amino-acid chain; its full sequence is UPF0235 protein APJL_1398 (98 aa).

The protein belongs to the UPF0235 family.

The polypeptide is UPF0235 protein APJL_1398 (Actinobacillus pleuropneumoniae serotype 3 (strain JL03)).